Consider the following 193-residue polypeptide: CASP-like protein 1D1 (193 aa).

The tract at residues 1 to 24 (MGYETKSTLDTERSTAPGTGTTTK) is disordered. The Cytoplasmic segment spans residues 1-30 (MGYETKSTLDTERSTAPGTGTTTKSCSMTQ). The segment covering 14-24 (STAPGTGTTTK) has biased composition (polar residues). The chain crosses the membrane as a helical span at residues 31-51 (VVLRFVLFAATLTSIVVMVTS). Residues 52–76 (KQTKNIFLPGTPIRIPAAEFTNSPA) are Extracellular-facing. Residues 77–97 (LIYFVVALSVACFYSIVSTFV) traverse the membrane as a helical segment. Topologically, residues 98 to 108 (TVSAFKKHSCS) are cytoplasmic. The helical transmembrane segment at 109 to 129 (AVLLLNLAIMDAVMVGIVASA) threads the bilayer. Topologically, residues 130-162 (TGAGGGVAYLGLKGNKEVRWGKICHIYDKFCRH) are extracellular. A helical transmembrane segment spans residues 163–183 (VGGAIAVSLFASVVLLLLSII). Residues 184-193 (SVLSLYKKIR) lie on the Cytoplasmic side of the membrane.

This sequence belongs to the Casparian strip membrane proteins (CASP) family. In terms of assembly, homodimer and heterodimers.

The protein localises to the cell membrane. This Arabidopsis thaliana (Mouse-ear cress) protein is CASP-like protein 1D1.